The sequence spans 306 residues: uncharacterized protein (306 aa).

8 helical membrane-spanning segments follow: residues 7 to 27 (LESW…GYLA), 30 to 50 (VGII…FMAL), 68 to 88 (LFIT…LFAL), 95 to 115 (ADHV…TLFI), 144 to 164 (AIGV…LMSF), 194 to 214 (IGAI…VLSV), 232 to 252 (IAIM…GLIF), and 274 to 294 (TIPF…NVAP).

The protein localises to the cell membrane. This is an uncharacterized protein from Mycoplasma genitalium (strain ATCC 33530 / DSM 19775 / NCTC 10195 / G37) (Mycoplasmoides genitalium).